Here is a 303-residue protein sequence, read N- to C-terminus: Recombination-associated protein RdgC (303 aa).

This sequence belongs to the RdgC family.

The protein localises to the cytoplasm. It is found in the nucleoid. May be involved in recombination. This is Recombination-associated protein RdgC from Yersinia enterocolitica serotype O:8 / biotype 1B (strain NCTC 13174 / 8081).